The following is a 399-amino-acid chain: S-adenosylmethionine synthase (399 aa).

Histidine 17 contributes to the ATP binding site. A Mg(2+)-binding site is contributed by aspartate 19. Position 45 (glutamate 45) interacts with K(+). The L-methionine site is built by glutamate 58 and glutamine 101. Residues 101–111 are flexible loop; that stretch reads QSPDIAQGVDK. ATP contacts are provided by residues 176–178, 243–244, aspartate 252, 258–259, and lysine 279; these read DGK, RF, and RK. L-methionine is bound at residue aspartate 252. Lysine 283 is a binding site for L-methionine.

Belongs to the AdoMet synthase family. Homotetramer; dimer of dimers. It depends on Mg(2+) as a cofactor. The cofactor is K(+).

It is found in the cytoplasm. The catalysed reaction is L-methionine + ATP + H2O = S-adenosyl-L-methionine + phosphate + diphosphate. It participates in amino-acid biosynthesis; S-adenosyl-L-methionine biosynthesis; S-adenosyl-L-methionine from L-methionine: step 1/1. In terms of biological role, catalyzes the formation of S-adenosylmethionine (AdoMet) from methionine and ATP. The overall synthetic reaction is composed of two sequential steps, AdoMet formation and the subsequent tripolyphosphate hydrolysis which occurs prior to release of AdoMet from the enzyme. The chain is S-adenosylmethionine synthase from Staphylococcus epidermidis (strain ATCC 35984 / DSM 28319 / BCRC 17069 / CCUG 31568 / BM 3577 / RP62A).